Here is a 62-residue protein sequence, read N- to C-terminus: Large ribosomal subunit protein bL28 (62 aa).

It belongs to the bacterial ribosomal protein bL28 family.

The polypeptide is Large ribosomal subunit protein bL28 (Parafrankia sp. (strain EAN1pec)).